The following is a 126-amino-acid chain: Large ribosomal subunit protein mL52 (126 aa).

Residues 1 to 28 (MLKITKICLASSATSTAQRSIALTAPRA) constitute a mitochondrion transit peptide.

This sequence belongs to the mitochondrion-specific ribosomal protein mL52 family. Component of the mitochondrial ribosome large subunit (39S) which comprises a 16S rRNA and about 50 distinct proteins.

It is found in the mitochondrion. The polypeptide is Large ribosomal subunit protein mL52 (mRpL52) (Drosophila melanogaster (Fruit fly)).